We begin with the raw amino-acid sequence, 158 residues long: Transcription elongation factor GreA (158 aa).

Residues 4–70 (QKQYPMTQEG…IEQDIQRIEH (67 aa)) are a coiled coil.

This sequence belongs to the GreA/GreB family.

Necessary for efficient RNA polymerase transcription elongation past template-encoded arresting sites. The arresting sites in DNA have the property of trapping a certain fraction of elongating RNA polymerases that pass through, resulting in locked ternary complexes. Cleavage of the nascent transcript by cleavage factors such as GreA or GreB allows the resumption of elongation from the new 3'terminus. GreA releases sequences of 2 to 3 nucleotides. In Staphylococcus aureus (strain Mu3 / ATCC 700698), this protein is Transcription elongation factor GreA.